Reading from the N-terminus, the 497-residue chain is MSISIETITKRNQYRVDQPQRQPSRLSTVASISEYQSDYSKTVFEEIELEVIPNKQNISTRSFRNDGNDSDPQTLDPDAYPPKRSIAFVLLNSILSDMSMSTALPISAAYTEILGGTDAFSGLVIGIPTMISLVCLYPMLRFANPKSANGYTLYFRPLIVSCISQIIGHLLYSLAYRAQWLYLILIGRMCNGVGFTMFLYHKKYLTDKHFVGQNRSTFLATLNILAQTVGFMAGSFLGGLLAKACMHLTNPIWNQYTVGSWFMLFAWCIYGILLSIFFKEIRADGNDSSARKPENFNGQAVKLSYTHKFMLVFLSMVAFISYFNIAGYQASVPIYAKELYHYNAFQSGNFLSLSALVIAPLVFLSTFLSKWAEDRDMMLYGFILGILALVVHLVLDVLHKVRVQPYFVLYSAMQFGFSIGSAPLISLATKQLHPKYHILVGIIVQIGISAADTVGAICGGAIFDITTVGFIALNLGIAVLVFIQLLFLWNSIKTKTG.

The interval 58–79 (ISTRSFRNDGNDSDPQTLDPDA) is disordered. Helical transmembrane passes span 86-106 (IAFVLLNSILSDMSMSTALPI), 120-140 (FSGLVIGIPTMISLVCLYPML), 155-175 (FRPLIVSCISQIIGHLLYSLA), 180-200 (WLYLILIGRMCNGVGFTMFLY), 222-242 (LNILAQTVGFMAGSFLGGLLA), 258-278 (VGSWFMLFAWCIYGILLSIFF), 309-329 (FMLVFLSMVAFISYFNIAGYQ), 348-368 (GNFLSLSALVIAPLVFLSTFL), 378-398 (MLYGFILGILALVVHLVLDVL), 407-427 (FVLYSAMQFGFSIGSAPLISL), 438-458 (ILVGIIVQIGISAADTVGAIC), and 468-488 (VGFIALNLGIAVLVFIQLLFL).

It belongs to the major facilitator superfamily.

The protein resides in the membrane. This is an uncharacterized protein from Schizosaccharomyces pombe (strain 972 / ATCC 24843) (Fission yeast).